An 809-amino-acid chain; its full sequence is Ribonuclease Z 1 (809 aa).

The interval 74 to 93 (ISSPDTYDSSSSSSTTSVSD) is disordered.

Belongs to the RNase Z family. Requires Zn(2+) as cofactor.

It localises to the nucleus. Its subcellular location is the cytoplasm. The catalysed reaction is Endonucleolytic cleavage of RNA, removing extra 3' nucleotides from tRNA precursor, generating 3' termini of tRNAs. A 3'-hydroxy group is left at the tRNA terminus and a 5'-phosphoryl group is left at the trailer molecule.. In terms of biological role, zinc phosphodiesterase, which displays some tRNA 3'-processing endonuclease activity. May be involved in tRNA maturation, by removing a 3'-trailer from precursor tRNA. In Schizosaccharomyces pombe (strain 972 / ATCC 24843) (Fission yeast), this protein is Ribonuclease Z 1 (trz1).